The following is a 262-amino-acid chain: Octopine permease ATP-binding protein P (262 aa).

The ABC transporter domain maps to 9 to 254 (VKLTGIRKNF…PRTERFRQFL (246 aa)). 41–48 (GSSGSGKS) lines the ATP pocket.

The protein belongs to the ABC transporter superfamily.

It is found in the cell inner membrane. Component of the octopine active transport system probably consisting of four subunits: Q, M, P and T. The sequence is that of Octopine permease ATP-binding protein P (occP) from Rhizobium meliloti (Ensifer meliloti).